The sequence spans 195 residues: Cyclin-dependent kinase inhibitor 7 (195 aa).

Residues 1–11 (MSETKPKRDSE) show a composition bias toward basic and acidic residues. 3 disordered regions span residues 1–50 (MSET…SVSD), 61–80 (EEED…SSET), and 117–154 (SSEN…TQAE). 2 stretches are compositionally biased toward low complexity: residues 37 to 50 (SSSS…SVSD) and 68 to 80 (SSSI…SSET). Threonine 151 carries the post-translational modification Phosphothreonine; by KIN10.

It belongs to the CDI family. ICK/KRP subfamily. As to quaternary structure, specifically interacts with CDKA-1, but not with CDKB1-1. Interacts with CYCD4-1. Binds to FBL17. Ubiquitinated by SCF(FBL17). Ubiquitination leads to its subsequent degradation, thus controlling cell cycle progression. Expressed in flowers, in developing pollen, and at lower levels in roots and leaves.

The protein localises to the nucleus. Its subcellular location is the nucleoplasm. Binds and inhibits CYCD2-1/CDKA-1 complex kinase activity. May target specifically CDKA-1. This Arabidopsis thaliana (Mouse-ear cress) protein is Cyclin-dependent kinase inhibitor 7 (KRP7).